Reading from the N-terminus, the 198-residue chain is MYDYIKGQLTKITAKYIVVEANGLGYMINVANPYSFTDSVNQLVTIYLHQVIREDAHLLFGFHTEDEKDVFLKLISVSGIGPTTALAIVAVDDNEGLVNAIDNSDIKYLMKFPKIGKKTAQQMVLDLAGKFVEAPQETGHTKARSNKAGNTQLDEAIEALLALGYKATELKKIRAFFEGTSETAEQYIKSALKLLMKG.

Positions 1-63 are domain I; it reads MYDYIKGQLT…EDAHLLFGFH (63 aa). Residues 64-142 form a domain II region; it reads TEDEKDVFLK…EAPQETGHTK (79 aa). Residues 143–147 are flexible linker; that stretch reads ARSNK. The tract at residues 148–198 is domain III; that stretch reads AGNTQLDEAIEALLALGYKATELKKIRAFFEGTSETAEQYIKSALKLLMKG.

It belongs to the RuvA family. Homotetramer. Forms an RuvA(8)-RuvB(12)-Holliday junction (HJ) complex. HJ DNA is sandwiched between 2 RuvA tetramers; dsDNA enters through RuvA and exits via RuvB. An RuvB hexamer assembles on each DNA strand where it exits the tetramer. Each RuvB hexamer is contacted by two RuvA subunits (via domain III) on 2 adjacent RuvB subunits; this complex drives branch migration. In the full resolvosome a probable DNA-RuvA(4)-RuvB(12)-RuvC(2) complex forms which resolves the HJ.

Its subcellular location is the cytoplasm. In terms of biological role, the RuvA-RuvB-RuvC complex processes Holliday junction (HJ) DNA during genetic recombination and DNA repair, while the RuvA-RuvB complex plays an important role in the rescue of blocked DNA replication forks via replication fork reversal (RFR). RuvA specifically binds to HJ cruciform DNA, conferring on it an open structure. The RuvB hexamer acts as an ATP-dependent pump, pulling dsDNA into and through the RuvAB complex. HJ branch migration allows RuvC to scan DNA until it finds its consensus sequence, where it cleaves and resolves the cruciform DNA. The protein is Holliday junction branch migration complex subunit RuvA of Streptococcus pyogenes serotype M6 (strain ATCC BAA-946 / MGAS10394).